The sequence spans 1368 residues: DNA-directed RNA polymerase subunit beta (1368 aa).

Belongs to the RNA polymerase beta chain family. The RNAP catalytic core consists of 2 alpha, 1 beta, 1 beta' and 1 omega subunit. When a sigma factor is associated with the core the holoenzyme is formed, which can initiate transcription.

The enzyme catalyses RNA(n) + a ribonucleoside 5'-triphosphate = RNA(n+1) + diphosphate. DNA-dependent RNA polymerase catalyzes the transcription of DNA into RNA using the four ribonucleoside triphosphates as substrates. In Burkholderia pseudomallei (strain K96243), this protein is DNA-directed RNA polymerase subunit beta.